The chain runs to 882 residues: Translation initiation factor IF-2 (882 aa).

Composition is skewed to polar residues over residues 38–56 (NDSN…AEYS), 97–124 (GGYS…YSQN), and 140–192 (GGYS…NRDS). Disordered stretches follow at residues 38–192 (NDSN…NRDS) and 236–274 (STPA…AETE). A compositionally biased stretch (basic and acidic residues) spans 243–259 (ENSKELNRKLGEKKKQQ). One can recognise a tr-type G domain in the interval 380–553 (EKPPVITIMG…DMMLLKANPS (174 aa)). Positions 389-396 (GHVDHGKT) are G1. A GTP-binding site is contributed by 389–396 (GHVDHGKT). Residues 414-418 (GITQH) form a G2 region. The interval 435–438 (DTPG) is G3. Residues 435–439 (DTPGH) and 489–492 (NKID) each bind GTP. Residues 489-492 (NKID) form a G4 region. Residues 525-527 (SAL) form a G5 region.

This sequence belongs to the TRAFAC class translation factor GTPase superfamily. Classic translation factor GTPase family. IF-2 subfamily.

The protein resides in the cytoplasm. Functionally, one of the essential components for the initiation of protein synthesis. Protects formylmethionyl-tRNA from spontaneous hydrolysis and promotes its binding to the 30S ribosomal subunits. Also involved in the hydrolysis of GTP during the formation of the 70S ribosomal complex. This is Translation initiation factor IF-2 (infB) from Borreliella burgdorferi (strain ATCC 35210 / DSM 4680 / CIP 102532 / B31) (Borrelia burgdorferi).